The chain runs to 394 residues: Purine ribonucleoside efflux pump NepI (394 aa).

The Cytoplasmic portion of the chain corresponds to 1–21 (MSEFIAENRGADAITRPNWSA). Residues 22-42 (VFSVAFCVACLIIVEFLPVSL) form a helical membrane-spanning segment. The Periplasmic segment spans residues 43-54 (LTPMAQDLGISE). A helical membrane pass occupies residues 55–75 (GVAGQSVTVTAFVAMFASLFI). The Cytoplasmic segment spans residues 76–85 (TQTIQATDRR). The chain crosses the membrane as a helical span at residues 86–106 (YVVILFAVLLTISCLLVSFAN). Position 107 (S107) is a topological domain, periplasmic. A helical transmembrane segment spans residues 108 to 128 (FSLLLIGRACLGLALGGFWAM). The Cytoplasmic portion of the chain corresponds to 129–147 (SASLTMRLVPPRTVPKALS). A helical transmembrane segment spans residues 148–168 (VIFGAVSIALVIAAPLGSFLG). The Periplasmic portion of the chain corresponds to 169–175 (ELIGWRN). A helical transmembrane segment spans residues 176-196 (VFNAAAVMGVLCIFWIIKSLP). Topologically, residues 197–215 (SLPGKPSHQKQNTFRLLQR) are cytoplasmic. A helical transmembrane segment spans residues 216-236 (PGVMAGMIAIFMSFAGQFAFF). Over 237–255 (TYIRPVYMNLAGFGVDGLT) the chain is Periplasmic. The chain crosses the membrane as a helical span at residues 256 to 276 (LVLLSFGIASFIGTSLSSFIL). The Cytoplasmic segment spans residues 277–281 (KRSVK). Residues 282–302 (LALAGAPLILAVSALVLTLCG) traverse the membrane as a helical segment. At 303–305 (SDK) the chain is on the periplasmic side. Residues 306–326 (IVATGVAIIWGLTFALVPVGW) traverse the membrane as a helical segment. The Cytoplasmic segment spans residues 327 to 343 (STWSTRSLADQAEKAGS). A helical transmembrane segment spans residues 344-364 (IQVAVIQLANTCGAAIGGYAL). The Periplasmic portion of the chain corresponds to 365–366 (DN). Residues 367-387 (IGLTSPLMLSGTLMLLTALLV) traverse the membrane as a helical segment. Over 388–394 (TAKVKMK) the chain is Cytoplasmic.

This sequence belongs to the major facilitator superfamily. DHA1 family. NepI (TC 2.A.1.2.26) subfamily.

It localises to the cell inner membrane. The catalysed reaction is inosine(in) + H(+)(out) = inosine(out) + H(+)(in). It carries out the reaction guanosine(in) + H(+)(out) = guanosine(out) + H(+)(in). In terms of biological role, involved in the efflux of purine ribonucleosides, such as inosine and guanosine. The polypeptide is Purine ribonucleoside efflux pump NepI (Shigella dysenteriae serotype 1 (strain Sd197)).